Here is a 300-residue protein sequence, read N- to C-terminus: Protoheme IX farnesyltransferase (300 aa).

9 helical membrane-spanning segments follow: residues 24–44, 48–68, 94–114, 118–138, 146–166, 172–192, 217–237, 239–259, and 278–298; these read VTQLAVFCAVIGMFLATPGMV, VLLGGTIGIGLLAGSAFAINC, LQILAFSTVLGGLGAWTLYTF, LTIWLTIATFVGYAVIYTLLL, IVIGGASGAMPPALGWAAVTG, AWILVLIIFVWTPPHFWVLAL, LHILLYTVILFAVTMMPFISG, SGAVYLTSAVLLGALFLAYAW, and IVYLSLLFAALLVDHYARPVI.

Belongs to the UbiA prenyltransferase family. Protoheme IX farnesyltransferase subfamily.

It is found in the cell inner membrane. The enzyme catalyses heme b + (2E,6E)-farnesyl diphosphate + H2O = Fe(II)-heme o + diphosphate. The protein operates within porphyrin-containing compound metabolism; heme O biosynthesis; heme O from protoheme: step 1/1. Functionally, converts heme B (protoheme IX) to heme O by substitution of the vinyl group on carbon 2 of heme B porphyrin ring with a hydroxyethyl farnesyl side group. This is Protoheme IX farnesyltransferase from Burkholderia mallei (strain NCTC 10247).